The primary structure comprises 403 residues: 4-hydroxy-3-methylbut-2-enyl diphosphate reductase (403 aa).

[4Fe-4S] cluster is bound at residue cysteine 66. Residue histidine 96 coordinates (2E)-4-hydroxy-3-methylbut-2-enyl diphosphate. Histidine 96 lines the dimethylallyl diphosphate pocket. Histidine 96 serves as a coordination point for isopentenyl diphosphate. Cysteine 157 lines the [4Fe-4S] cluster pocket. Position 185 (histidine 185) interacts with (2E)-4-hydroxy-3-methylbut-2-enyl diphosphate. Histidine 185 provides a ligand contact to dimethylallyl diphosphate. Histidine 185 is a binding site for isopentenyl diphosphate. Glutamate 187 functions as the Proton donor in the catalytic mechanism. Residue threonine 250 coordinates (2E)-4-hydroxy-3-methylbut-2-enyl diphosphate. Cysteine 288 lines the [4Fe-4S] cluster pocket. (2E)-4-hydroxy-3-methylbut-2-enyl diphosphate is bound by residues serine 317, serine 318, asparagine 319, and serine 379. Residues serine 317, serine 318, asparagine 319, and serine 379 each coordinate dimethylallyl diphosphate. 4 residues coordinate isopentenyl diphosphate: serine 317, serine 318, asparagine 319, and serine 379.

This sequence belongs to the IspH family. The cofactor is [4Fe-4S] cluster.

It carries out the reaction isopentenyl diphosphate + 2 oxidized [2Fe-2S]-[ferredoxin] + H2O = (2E)-4-hydroxy-3-methylbut-2-enyl diphosphate + 2 reduced [2Fe-2S]-[ferredoxin] + 2 H(+). The enzyme catalyses dimethylallyl diphosphate + 2 oxidized [2Fe-2S]-[ferredoxin] + H2O = (2E)-4-hydroxy-3-methylbut-2-enyl diphosphate + 2 reduced [2Fe-2S]-[ferredoxin] + 2 H(+). It functions in the pathway isoprenoid biosynthesis; dimethylallyl diphosphate biosynthesis; dimethylallyl diphosphate from (2E)-4-hydroxy-3-methylbutenyl diphosphate: step 1/1. The protein operates within isoprenoid biosynthesis; isopentenyl diphosphate biosynthesis via DXP pathway; isopentenyl diphosphate from 1-deoxy-D-xylulose 5-phosphate: step 6/6. Functionally, catalyzes the conversion of 1-hydroxy-2-methyl-2-(E)-butenyl 4-diphosphate (HMBPP) into a mixture of isopentenyl diphosphate (IPP) and dimethylallyl diphosphate (DMAPP). Acts in the terminal step of the DOXP/MEP pathway for isoprenoid precursor biosynthesis. The sequence is that of 4-hydroxy-3-methylbut-2-enyl diphosphate reductase from Rippkaea orientalis (strain PCC 8801 / RF-1) (Cyanothece sp. (strain PCC 8801)).